We begin with the raw amino-acid sequence, 172 residues long: Bacilliredoxin SRU_0242 (172 aa).

Residues 141 to 172 (TDEAPPSDAPSRPDLSSSPNAGGLPSTFQSIS) form a disordered region. Residues 154-172 (DLSSSPNAGGLPSTFQSIS) are compositionally biased toward polar residues.

It belongs to the bacilliredoxin family.

The chain is Bacilliredoxin SRU_0242 from Salinibacter ruber (strain DSM 13855 / M31).